The chain runs to 546 residues: Chaperonin GroEL 4 (546 aa).

Residues 30–33 (TLGP), Lys51, 87–91 (DGTTT), Gly415, and Asp495 contribute to the ATP site. Residues 524-546 (APKDTPAAGQPGGPGAGGPGLDF) are disordered. A compositionally biased stretch (gly residues) spans 533-546 (QPGGPGAGGPGLDF).

It belongs to the chaperonin (HSP60) family. Forms a cylinder of 14 subunits composed of two heptameric rings stacked back-to-back. Interacts with the co-chaperonin GroES.

It localises to the cytoplasm. It catalyses the reaction ATP + H2O + a folded polypeptide = ADP + phosphate + an unfolded polypeptide.. Together with its co-chaperonin GroES, plays an essential role in assisting protein folding. The GroEL-GroES system forms a nano-cage that allows encapsulation of the non-native substrate proteins and provides a physical environment optimized to promote and accelerate protein folding. This is Chaperonin GroEL 4 from Paraburkholderia xenovorans (strain LB400).